A 306-amino-acid chain; its full sequence is Ribosomal protein L11 methyltransferase (306 aa).

Residues threonine 154, glycine 179, aspartate 201, and asparagine 242 each contribute to the S-adenosyl-L-methionine site.

The protein belongs to the methyltransferase superfamily. PrmA family.

The protein localises to the cytoplasm. The catalysed reaction is L-lysyl-[protein] + 3 S-adenosyl-L-methionine = N(6),N(6),N(6)-trimethyl-L-lysyl-[protein] + 3 S-adenosyl-L-homocysteine + 3 H(+). Its function is as follows. Methylates ribosomal protein L11. The protein is Ribosomal protein L11 methyltransferase of Xylella fastidiosa (strain 9a5c).